Here is a 393-residue protein sequence, read N- to C-terminus: Phosphatidate cytidylyltransferase (393 aa).

Transmembrane regions (helical) follow at residues 49–69 (NFFRRLVLSIVMISGFCWISV), 73–93 (IYSFGLIIFLTISIIREIIGI), 108–128 (IILGLAVPIYSYLVFPSIMMM), 141–161 (LSFVCFYSYVAAFMCFVASLR), 171–191 (LFALIHLSTYTMAIAAKCAIF), 198–218 (FWFVFPALLVISNDISAYVVG), 237–257 (GFIGAFIFTTAVGFALGHLHV), and 290–310 (IHIIPFIFVASFVAPFSGFLA).

This sequence belongs to the CDS family.

Its subcellular location is the membrane. The enzyme catalyses a 1,2-diacyl-sn-glycero-3-phosphate + CTP + H(+) = a CDP-1,2-diacyl-sn-glycerol + diphosphate. Its pathway is phospholipid metabolism; CDP-diacylglycerol biosynthesis; CDP-diacylglycerol from sn-glycerol 3-phosphate: step 3/3. The sequence is that of Phosphatidate cytidylyltransferase (CDS1) from Encephalitozoon cuniculi (strain GB-M1) (Microsporidian parasite).